The following is a 302-amino-acid chain: MRKEYLVSHIEENAHQADIYSLNVVAGNLWSASGDSKIKKWSIGDAEHSLVEEIDTPHKLGVHHLATSLDENVVVSCGFGQDVYVWNPETNEFRDLGNNAQHPSECWSSCISPDGQTIAFTSVDGRIAVWDNPSDCKISELDTKGKFGLCIDYSPNGRFIVSGHQTGQLFLISTETGRLFHVLSGHTSPVRSVAFSPGSTLLAAAGDSKMITIYDVLSGDQVGQLRGHAAWIFAVAFNPVGDLLLSADVEGKIKIWDIDTMECISTQSETDGAIWAVAWYKNGFIVAGADKSIRWYRAAATE.

WD repeat units follow at residues alanine 14–valine 51, proline 57–leucine 96, glutamine 101–glutamate 140, aspartate 142–serine 184, glycine 185–arginine 226, glycine 227–threonine 266, and glutamate 269–glutamate 302.

As to quaternary structure, component of the DSB catalytic core (DSBC) complex, composed of at least rec12, rec6 and rec14. The complex interacts with mde2.

Its function is as follows. Required for formation of the rec12-mediated double-strand breaks (DSBs) that initiate meiotic recombination. This chain is Meiotic recombination protein rec14, found in Schizosaccharomyces pombe (strain 972 / ATCC 24843) (Fission yeast).